Consider the following 416-residue polypeptide: Adrenocortical dysplasia protein (416 aa).

The PWI signature appears at 11–13 (PWI). S25 carries the post-translational modification Phosphoserine. The interaction with POT1 stretch occupies residues 156–245 (ESASSSAGLT…SSTGSSQKAR (90 aa)). The segment covering 234–251 (ILSSTGSSQKARGTSASP) has biased composition (polar residues). A disordered region spans residues 234 to 306 (ILSSTGSSQK…TSPPCNSTPS (73 aa)). Residues 259–272 (SGASVSLLSALATS) are compositionally biased toward low complexity. Polar residues predominate over residues 273–292 (DPGQMDSSQSPPAVGSTSPR). Phosphoserine occurs at positions 313 and 317. K345 is covalently cross-linked (Glycyl lysine isopeptide (Lys-Gly) (interchain with G-Cter in SUMO2)).

In terms of assembly, component of the shelterin complex (telosome) composed of TERF1, TERF2, TINF2, TERF2IP ACD and POT1. Forms heterodimers with POT1. Identified in a complex with POT1 and single-stranded telomeric DNA. Interacts with STN1 and TINF2. Ubiquitous.

It is found in the nucleus. Its subcellular location is the chromosome. It localises to the telomere. Its function is as follows. Component of the shelterin complex (telosome) that is involved in the regulation of telomere length and protection. Shelterin associates with arrays of double-stranded TTAGGG repeats added by telomerase and protects chromosome ends. Without its protective activity, telomeres are no longer hidden from the DNA damage surveillance and chromosome ends are inappropriately processed by DNA repair pathways. Promotes binding of POT1 to single-stranded telomeric DNA. Modulates the inhibitory effects of POT1 on telomere elongation. The ACD-POT1 heterodimer enhances telomere elongation by recruiting telomerase to telomeres and increasing its processivity. May play a role in organogenesis. The protein is Adrenocortical dysplasia protein of Mus musculus (Mouse).